The following is a 312-amino-acid chain: Tetraacyldisaccharide 4'-kinase (312 aa).

Residue 60-67 (IAGGSGKT) participates in ATP binding.

The protein belongs to the LpxK family.

It carries out the reaction a lipid A disaccharide + ATP = a lipid IVA + ADP + H(+). It participates in glycolipid biosynthesis; lipid IV(A) biosynthesis; lipid IV(A) from (3R)-3-hydroxytetradecanoyl-[acyl-carrier-protein] and UDP-N-acetyl-alpha-D-glucosamine: step 6/6. Its function is as follows. Transfers the gamma-phosphate of ATP to the 4'-position of a tetraacyldisaccharide 1-phosphate intermediate (termed DS-1-P) to form tetraacyldisaccharide 1,4'-bis-phosphate (lipid IVA). The chain is Tetraacyldisaccharide 4'-kinase from Helicobacter pylori (strain J99 / ATCC 700824) (Campylobacter pylori J99).